A 216-amino-acid polypeptide reads, in one-letter code: Ribonuclease HII (216 aa).

In terms of domain architecture, RNase H type-2 spans 27–216; the sequence is ASLAGVDEAG…VKEHVKNCEG (190 aa). Residues Asp-33, Glu-34, and Asp-125 each contribute to the a divalent metal cation site.

Belongs to the RNase HII family. Requires Mn(2+) as cofactor. Mg(2+) is required as a cofactor.

Its subcellular location is the cytoplasm. It catalyses the reaction Endonucleolytic cleavage to 5'-phosphomonoester.. Functionally, endonuclease that specifically degrades the RNA of RNA-DNA hybrids. The protein is Ribonuclease HII of Geotalea daltonii (strain DSM 22248 / JCM 15807 / FRC-32) (Geobacter daltonii).